Consider the following 165-residue polypeptide: Fatty acid-binding protein homolog 3 (165 aa).

An N-terminal signal peptide occupies residues 1–19; it reads MNLYLTLFSFCFLAIMAEA.

It belongs to the calycin superfamily. Fatty-acid binding protein (FABP) family. Expressed in presumptive hypodermal cells by the comma stage and in posterior body wall muscle cells by the two-fold stage. From L1 to adult stages, expression continues in body wall muscle cells adjacent to the pseudocoelom, while hypodermal expression is extinguished.

It localises to the secreted. In terms of biological role, may play a role in sequestering potentially toxic fatty acids and their peroxidation products, or it may be involved in the maintenance of the impermeable lipid layer of the eggshell. The protein is Fatty acid-binding protein homolog 3 (lbp-3) of Caenorhabditis elegans.